A 264-amino-acid chain; its full sequence is PDZ domain-containing protein 9 (264 aa).

The region spanning 22–109 (VHNLSKTQQT…GTVLQIKVYR (88 aa)) is the PDZ domain.

This chain is PDZ domain-containing protein 9 (PDZD9), found in Macaca fascicularis (Crab-eating macaque).